A 406-amino-acid chain; its full sequence is ATP synthase subunit a (406 aa).

Composition is skewed to low complexity over residues 22–31 (AGEHGAPAPE) and 43–59 (DAAG…AEHG). The disordered stretch occupies residues 22-76 (AGEHGAPAPEVATPAEGHGARDAAGAATDPHGAAAEHGAAAHEDPAQHGAAGAEA). The next 6 helical transmembrane spans lie at 151–171 (KHVV…FAAV), 209–229 (FVPY…FGLV), 232–252 (AATA…TFLI), 278–298 (LWPL…TKPF), 304–324 (LFAN…LIFA), and 351–371 (VQAY…VAHH). Residues 375 to 406 (DEHEEHGHGAAATGGAHGSHGSHVAGASPGHG) are disordered. Residues 383 to 406 (GAAATGGAHGSHGSHVAGASPGHG) show a composition bias toward low complexity.

It belongs to the ATPase A chain family. In terms of assembly, F-type ATPases have 2 components, CF(1) - the catalytic core - and CF(0) - the membrane proton channel. CF(1) has five subunits: alpha(3), beta(3), gamma(1), delta(1), epsilon(1). CF(0) has three main subunits: a(1), b(2) and c(9-12). The alpha and beta chains form an alternating ring which encloses part of the gamma chain. CF(1) is attached to CF(0) by a central stalk formed by the gamma and epsilon chains, while a peripheral stalk is formed by the delta and b chains.

The protein localises to the cell inner membrane. Its function is as follows. Key component of the proton channel; it plays a direct role in the translocation of protons across the membrane. The polypeptide is ATP synthase subunit a (Anaeromyxobacter sp. (strain Fw109-5)).